Consider the following 193-residue polypeptide: Xanthine phosphoribosyltransferase (193 aa).

Xanthine is bound by residues leucine 20 and asparagine 27. Alanine 128–alanine 132 is a binding site for 5-phospho-alpha-D-ribose 1-diphosphate. Lysine 156 is a xanthine binding site.

The protein belongs to the purine/pyrimidine phosphoribosyltransferase family. Xpt subfamily. As to quaternary structure, homodimer.

The protein localises to the cytoplasm. It catalyses the reaction XMP + diphosphate = xanthine + 5-phospho-alpha-D-ribose 1-diphosphate. Its pathway is purine metabolism; XMP biosynthesis via salvage pathway; XMP from xanthine: step 1/1. Functionally, converts the preformed base xanthine, a product of nucleic acid breakdown, to xanthosine 5'-monophosphate (XMP), so it can be reused for RNA or DNA synthesis. The sequence is that of Xanthine phosphoribosyltransferase from Staphylococcus haemolyticus (strain JCSC1435).